A 444-amino-acid chain; its full sequence is Tubulin beta-7 chain (444 aa).

Residues Gln11, Glu69, Ser138, Gly142, Thr143, Gly144, Asn204, and Asn226 each contribute to the GTP site. A Mg(2+)-binding site is contributed by Glu69.

Belongs to the tubulin family. In terms of assembly, dimer of alpha and beta chains. A typical microtubule is a hollow water-filled tube with an outer diameter of 25 nm and an inner diameter of 15 nM. Alpha-beta heterodimers associate head-to-tail to form protofilaments running lengthwise along the microtubule wall with the beta-tubulin subunit facing the microtubule plus end conferring a structural polarity. Microtubules usually have 13 protofilaments but different protofilament numbers can be found in some organisms and specialized cells. It depends on Mg(2+) as a cofactor.

The protein resides in the cytoplasm. It is found in the cytoskeleton. Its function is as follows. Tubulin is the major constituent of microtubules, a cylinder consisting of laterally associated linear protofilaments composed of alpha- and beta-tubulin heterodimers. Microtubules grow by the addition of GTP-tubulin dimers to the microtubule end, where a stabilizing cap forms. Below the cap, tubulin dimers are in GDP-bound state, owing to GTPase activity of alpha-tubulin. The polypeptide is Tubulin beta-7 chain (Gossypium hirsutum (Upland cotton)).